A 506-amino-acid polypeptide reads, in one-letter code: 2-isopropylmalate synthase (506 aa).

In terms of domain architecture, Pyruvate carboxyltransferase spans 4-266 (ILFMDTTLRD…EPSMTLKEIK (263 aa)). The Mn(2+) site is built by Asp-13, His-201, His-203, and Asn-237. Positions 390-506 (NITQLQVHFV…KLKSFIQLVK (117 aa)) are regulatory domain.

This sequence belongs to the alpha-IPM synthase/homocitrate synthase family. LeuA type 1 subfamily. Homodimer. The cofactor is Mn(2+).

The protein localises to the cytoplasm. The enzyme catalyses 3-methyl-2-oxobutanoate + acetyl-CoA + H2O = (2S)-2-isopropylmalate + CoA + H(+). The protein operates within amino-acid biosynthesis; L-leucine biosynthesis; L-leucine from 3-methyl-2-oxobutanoate: step 1/4. Its function is as follows. Catalyzes the condensation of the acetyl group of acetyl-CoA with 3-methyl-2-oxobutanoate (2-ketoisovalerate) to form 3-carboxy-3-hydroxy-4-methylpentanoate (2-isopropylmalate). The sequence is that of 2-isopropylmalate synthase from Bacillus cereus (strain ZK / E33L).